The primary structure comprises 255 residues: 1-(5-phosphoribosyl)-5-[(5-phosphoribosylamino)methylideneamino] imidazole-4-carboxamide isomerase (255 aa).

The Proton acceptor role is filled by D8. D129 (proton donor) is an active-site residue.

It belongs to the HisA/HisF family.

The protein localises to the cytoplasm. The enzyme catalyses 1-(5-phospho-beta-D-ribosyl)-5-[(5-phospho-beta-D-ribosylamino)methylideneamino]imidazole-4-carboxamide = 5-[(5-phospho-1-deoxy-D-ribulos-1-ylimino)methylamino]-1-(5-phospho-beta-D-ribosyl)imidazole-4-carboxamide. Its pathway is amino-acid biosynthesis; L-histidine biosynthesis; L-histidine from 5-phospho-alpha-D-ribose 1-diphosphate: step 4/9. This Prochlorococcus marinus (strain MIT 9312) protein is 1-(5-phosphoribosyl)-5-[(5-phosphoribosylamino)methylideneamino] imidazole-4-carboxamide isomerase.